We begin with the raw amino-acid sequence, 1097 residues long: MSWLRSSPLRQSLTRTTSSGNGIRPIDAATDCDPRACYDSFCKHWQQAYDIIQHSSAPAPTHDDVLGVVSHLDYMVTLLLVELHNCNKISLADSNAPPTAPCLEYLLSENLLDKLYEWAATTGRYANAVRLEQLKLYELLVSHSRHQLLCHEPFLRPLLKILASSQGEIFPPDLEKRLVILLNQLCVVLMQNVHLLDLFFFSAQTQVQEQIQNGNVPPPKSGTTTNFIIFSLLIPYVHREGSIGHQARDALLLCMALSQKNSNIGTYIAQYSSICPLLVTGLGGLYSRLPNSIEINSIDWHRITPDDVTEIPELNLFMNALEFCNAVVQVAHEMIKQQLLDFMYQGFIVPVLGPAILQTNIDSQISAMSYLDLILRSITEPGLLRAFVKFLLDTEKFDGERILDALVERLNSPDGNLCMVTMALFDTLLGLHCEDLMLELMLKYMLPGKHVPISHRHKINKIDPYLNSTEFFLELTPDVMKRARDLARPKSVNEHQQESALPNELSLPSLPSPVMSKTIGANWNYYGLHTGDSLYANLQAYLFEAHWRIAQCQRDCLKWANSYRYQKWPRQGQPQNRLHNHALELAKQFFIEFGGEGIGGLGGGAAIASEAGEKQLDSLQSIGESSGYESFKWRPADEDVSASSGNGTGSVVVGDHPGHDVTISESDVDGHNISSSLSNSSGRRESWRISHNTRNELLLTDLDFSEDLFAQGTVSLGPFLNAIWGKLQTFTSNSLYVNLHLTGLITRLAWYPLPLIHSLLLRSDIVITSDTPSFHQVLRILKQQIDAELPVTEDSLEIIDVARSSLIDREFRLVNARKGNENSPLHQQQSLQHPHHLQPLPAPQQTGAGAQQRSAYATLSAATPVQATPFSAYDPFKRSNNSRRSISKSITSMFSRKSTLPAPAIAPTPASSGLSQIYAFFTGAASTIMGNNNQQSSNQTHLNSSSSSAVTTCETSLSTQPHATGPGSAQLRTTSSTISTSSGTTAGSGGGGGSGSNSSFSIGGSTQTLSAHSNNTTNSSSTLHGGLDGIGPPTGSFNSEPVSLDSVGSSMGIIANTSGTERSRDLALCAVLLDEWLKELAAIAQEQSIVLVTDQWL.

Positions 1–21 (MSWLRSSPLRQSLTRTTSSGN) are enriched in polar residues. The disordered stretch occupies residues 1–25 (MSWLRSSPLRQSLTRTTSSGNGIRP). At Ser491 the chain carries Phosphoserine. Disordered stretches follow at residues 639–684 (DVSA…SGRR), 820–856 (NENS…RSAY), and 932–1042 (NNQQ…SEPV). Residues 641–654 (SASSGNGTGSVVVG) show a composition bias toward low complexity. Ser823 bears the Phosphoserine mark. 2 stretches are compositionally biased toward low complexity: residues 824 to 852 (PLHQ…GAQQ) and 932 to 948 (NNQQ…SSSS). Residues 949–962 (AVTTCETSLSTQPH) show a composition bias toward polar residues. Residues 973-985 (TTSSTISTSSGTT) are compositionally biased toward low complexity. Gly residues predominate over residues 986 to 995 (AGSGGGGGSG). Composition is skewed to low complexity over residues 996–1006 (SNSSFSIGGST) and 1013–1022 (SNNTTNSSST).

Belongs to the FHIP family.

The sequence is that of FHIP family protein GK23746 from Drosophila willistoni (Fruit fly).